Reading from the N-terminus, the 322-residue chain is HPr kinase/phosphorylase (322 aa).

Residues H142 and K163 contribute to the active site. 157 to 164 (GASGVGKS) provides a ligand contact to ATP. Residue S164 participates in Mg(2+) binding. The Proton acceptor; for phosphorylation activity. Proton donor; for dephosphorylation activity role is filled by D181. The tract at residues 205-214 (MEIRGIGIID) is important for the catalytic mechanism of both phosphorylation and dephosphorylation. E206 contributes to the Mg(2+) binding site. R247 is an active-site residue. An important for the catalytic mechanism of dephosphorylation region spans residues 268 to 273 (PVKVGR).

The protein belongs to the HPrK/P family. In terms of assembly, homohexamer. Mg(2+) serves as cofactor.

It catalyses the reaction [HPr protein]-L-serine + ATP = [HPr protein]-O-phospho-L-serine + ADP + H(+). The enzyme catalyses [HPr protein]-O-phospho-L-serine + phosphate + H(+) = [HPr protein]-L-serine + diphosphate. In terms of biological role, catalyzes the ATP- as well as the pyrophosphate-dependent phosphorylation of a specific serine residue in HPr, a phosphocarrier protein of the phosphoenolpyruvate-dependent sugar phosphotransferase system (PTS). HprK/P also catalyzes the pyrophosphate-producing, inorganic phosphate-dependent dephosphorylation (phosphorolysis) of seryl-phosphorylated HPr (P-Ser-HPr). The two antagonistic activities of HprK/P are regulated by several intracellular metabolites, which change their concentration in response to the absence or presence of rapidly metabolisable carbon sources (glucose, fructose, etc.) in the growth medium. Therefore, by controlling the phosphorylation state of HPr, HPrK/P is a sensor enzyme that plays a major role in the regulation of carbon metabolism and sugar transport: it mediates carbon catabolite repression (CCR), and regulates PTS-catalyzed carbohydrate uptake and inducer exclusion. In Lactobacillus acidophilus (strain ATCC 700396 / NCK56 / N2 / NCFM), this protein is HPr kinase/phosphorylase.